We begin with the raw amino-acid sequence, 259 residues long: 4-hydroxy-tetrahydrodipicolinate reductase (259 aa).

NAD(+) contacts are provided by residues 8–13 (GFKGRM), 93–95 (GTT), and 119–122 (APNF). His149 serves as the catalytic Proton donor/acceptor. Residue His150 participates in (S)-2,3,4,5-tetrahydrodipicolinate binding. Catalysis depends on Lys153, which acts as the Proton donor. Residue 159–160 (GT) participates in (S)-2,3,4,5-tetrahydrodipicolinate binding.

The protein belongs to the DapB family.

The protein resides in the cytoplasm. It catalyses the reaction (S)-2,3,4,5-tetrahydrodipicolinate + NAD(+) + H2O = (2S,4S)-4-hydroxy-2,3,4,5-tetrahydrodipicolinate + NADH + H(+). The enzyme catalyses (S)-2,3,4,5-tetrahydrodipicolinate + NADP(+) + H2O = (2S,4S)-4-hydroxy-2,3,4,5-tetrahydrodipicolinate + NADPH + H(+). It participates in amino-acid biosynthesis; L-lysine biosynthesis via DAP pathway; (S)-tetrahydrodipicolinate from L-aspartate: step 4/4. In terms of biological role, catalyzes the conversion of 4-hydroxy-tetrahydrodipicolinate (HTPA) to tetrahydrodipicolinate. This Enterococcus faecalis (strain ATCC 700802 / V583) protein is 4-hydroxy-tetrahydrodipicolinate reductase.